A 348-amino-acid polypeptide reads, in one-letter code: Ferredoxin--NADP reductase 1 (348 aa).

7 residues coordinate FAD: D33, K41, Y45, V85, L120, D287, and S328.

It belongs to the ferredoxin--NADP reductase type 2 family. Homodimer. FAD serves as cofactor.

It carries out the reaction 2 reduced [2Fe-2S]-[ferredoxin] + NADP(+) + H(+) = 2 oxidized [2Fe-2S]-[ferredoxin] + NADPH. In Oceanobacillus iheyensis (strain DSM 14371 / CIP 107618 / JCM 11309 / KCTC 3954 / HTE831), this protein is Ferredoxin--NADP reductase 1.